The primary structure comprises 917 residues: Translation initiation factor IF-2 (917 aa).

The span at 102–249 (EKSQAEEQAL…KWTAEPKAPE (148 aa)) shows a compositional bias: basic and acidic residues. Positions 102–326 (EKSQAEEQAL…KSSTLQQGFH (225 aa)) are disordered. Residues 279–293 (RRGRTAKAPRAKKNN) show a composition bias toward basic residues. Over residues 294–306 (RHSEKADREEARA) the composition is skewed to basic and acidic residues. One can recognise a tr-type G domain in the interval 416–585 (SRAPVVTIMG…LLQAEVLELK (170 aa)). A G1 region spans residues 425–432 (GHVDHGKT). A GTP-binding site is contributed by 425-432 (GHVDHGKT). The interval 450–454 (GITQH) is G2. The segment at 471–474 (DTPG) is G3. Residues 471–475 (DTPGH) and 525–528 (NKID) each bind GTP. The segment at 525–528 (NKID) is G4. The segment at 561 to 563 (SAK) is G5.

It belongs to the TRAFAC class translation factor GTPase superfamily. Classic translation factor GTPase family. IF-2 subfamily.

It localises to the cytoplasm. Functionally, one of the essential components for the initiation of protein synthesis. Protects formylmethionyl-tRNA from spontaneous hydrolysis and promotes its binding to the 30S ribosomal subunits. Also involved in the hydrolysis of GTP during the formation of the 70S ribosomal complex. The sequence is that of Translation initiation factor IF-2 (infB) from Proteus vulgaris.